The chain runs to 205 residues: Glycerol-3-phosphate acyltransferase (205 aa).

Helical transmembrane passes span L5–A25, I56–L76, V84–F104, I114–L134, L144–F164, and H165–H185.

Belongs to the PlsY family. Probably interacts with PlsX.

It localises to the cell membrane. It carries out the reaction an acyl phosphate + sn-glycerol 3-phosphate = a 1-acyl-sn-glycero-3-phosphate + phosphate. It functions in the pathway lipid metabolism; phospholipid metabolism. Its function is as follows. Catalyzes the transfer of an acyl group from acyl-phosphate (acyl-PO(4)) to glycerol-3-phosphate (G3P) to form lysophosphatidic acid (LPA). This enzyme utilizes acyl-phosphate as fatty acyl donor, but not acyl-CoA or acyl-ACP. The chain is Glycerol-3-phosphate acyltransferase from Shouchella clausii (strain KSM-K16) (Alkalihalobacillus clausii).